Here is a 98-residue protein sequence, read N- to C-terminus: Large ribosomal subunit protein uL23 (98 aa).

Belongs to the universal ribosomal protein uL23 family. In terms of assembly, part of the 50S ribosomal subunit. Contacts protein L29, and trigger factor when it is bound to the ribosome.

Functionally, one of the early assembly proteins it binds 23S rRNA. One of the proteins that surrounds the polypeptide exit tunnel on the outside of the ribosome. Forms the main docking site for trigger factor binding to the ribosome. The sequence is that of Large ribosomal subunit protein uL23 from Bordetella bronchiseptica (strain ATCC BAA-588 / NCTC 13252 / RB50) (Alcaligenes bronchisepticus).